The sequence spans 405 residues: Solute carrier family 35 member E2B (405 aa).

The tract at residues 1-28 (MSSSVKTPALEELVPGSEEKPKGRSPLS) is disordered. The next 10 helical transmembrane spans lie at 81–101 (LWFFFSFCTLFLNKYILSLLG), 106–126 (MLGAVQMLSTTVIGCVKTLVP), 142–162 (FLMTMLFVGLMRFATVVLGLV), 167–187 (VAVSFAETVKSSAPIFTVIMS), 195–215 (TGLLVNLSLIPVMGGLALCTA), 219–241 (SFNVLGFSAALSTNIMDCLQNVF), 264–284 (AAAVAMLVPARVFFTDVPVIG), 296–316 (VVLLLLTDGVLFHLQSVTAYA), 326–346 (FSVASTVKHALSIWLSVIVFG), and 347–367 (NKITSLSAVGTALVTVGVLLY). Residues 380–405 (SLAAATGRAPDDTVEPLLPQDPRQHP) are disordered.

It belongs to the TPT transporter family. SLC35E subfamily.

The protein localises to the membrane. Its function is as follows. Putative transporter. The protein is Solute carrier family 35 member E2B (SLC35E2B) of Homo sapiens (Human).